The primary structure comprises 268 residues: Tetraspanin-33 (268 aa).

Residues 1-23 are Cytoplasmic-facing; sequence MVRKSPGSGKEEDFTFISPVVKY. The helical transmembrane segment at 24–44 threads the bilayer; that stretch reads LLIFFNMLFWVISMVMVGIGV. Topologically, residues 45–63 are extracellular; sequence YARLLKHAEAAMACLAVDP. A helical transmembrane segment spans residues 64 to 84; sequence ALLLIGVGILMFLITFCGCIG. Topologically, residues 85 to 95 are cytoplasmic; sequence SLRENICLLQT. A helical membrane pass occupies residues 96 to 116; it reads FSICLTLVFLLQLAVGIVGFI. At 117–226 the chain is on the extracellular side; it reads FSDKARGKVS…FIHTNGCIDR (110 aa). Cystine bridges form between Cys-155–Cys-223, Cys-156–Cys-188, Cys-172–Cys-182, and Cys-189–Cys-202. N-linked (GlcNAc...) asparagine glycosylation is found at Asn-171 and Asn-176. The helical transmembrane segment at 227–247 threads the bilayer; it reads LVNWIHSNLFLLGGVALGLAI. Residues 248–268 lie on the Cytoplasmic side of the membrane; it reads PQVTKHLRAKLIYTWRIGIQV.

This sequence belongs to the tetraspanin (TM4SF) family. As to quaternary structure, homodimer; disulfide-linked.

It is found in the cell membrane. The protein resides in the cell junction. Its subcellular location is the adherens junction. The protein localises to the cytoplasm. Functionally, part of TspanC8 subgroup, composed of 6 members that interact with the transmembrane metalloprotease ADAM10. This interaction is required for ADAM10 exit from the endoplasmic reticulum and for enzymatic maturation and trafficking to the cell surface as well as substrate specificity. Different TspanC8/ADAM10 complexes have distinct substrates. This Xenopus laevis (African clawed frog) protein is Tetraspanin-33 (tspan33).